The primary structure comprises 822 residues: Adhesion G protein-coupled receptor E2 (822 aa).

The N-terminal stretch at 1-18 (MGGRVFLAFCVWLTLLGA) is a signal peptide. At 19–530 (ETQDSRDCAR…DVQEEDPVLT (512 aa)) the chain is on the extracellular side. The 42-residue stretch at 22-63 (DSRDCARWCPENSSCVNATACRCNPGFSSSSEIFTSPTEICD) folds into the EGF-like 1 domain. Intrachain disulfides connect Cys-26–Cys-36, Cys-30–Cys-42, Cys-44–Cys-62, Cys-68–Cys-82, and Cys-76–Cys-91. 2 N-linked (GlcNAc...) asparagine glycosylation sites follow: Asn-33 and Asn-38. The region spanning 64–103 (DINECVPPSKVSCGKSSDCRNTEGSYDCVCNPGYELVSGA) is the EGF-like 1; calcium-binding domain. The N-linked (GlcNAc...) asparagine glycan is linked to Asn-108. The region spanning 116-159 (DVDECQQNPRLCKSYGTCVNTLGSFTCQCLPGFKFKPEDPKLCT) is the EGF-like 2; calcium-binding domain. Disulfide bonds link Cys-120/Cys-133, Cys-127/Cys-142, Cys-144/Cys-158, Cys-164/Cys-177, and Cys-171/Cys-186. An EGF-like 3; calcium-binding domain is found at 160–198 (DVNECTSGQNPCHSSTHCLNNVGSYQCRCRPGWQPIPGS). Asn-203, Asn-222, Asn-351, Asn-371, Asn-427, Asn-449, and Asn-453 each carry an N-linked (GlcNAc...) asparagine glycan. The EGF-like 4; calcium-binding domain occupies 209 to 247 (DVDECSSGLHQCDNSTVCFNTVGSYTCRCRPGWEPKHGI). Cystine bridges form between Cys-213-Cys-226 and Cys-220-Cys-235. The GAIN-B domain maps to 351 to 523 (NFSYPAGTEF…AVLMAPYDVQ (173 aa)). 2 disulfide bridges follow: Cys-475–Cys-505 and Cys-493–Cys-507. Residues 475–523 (CVFWEHGQNGCGHWATTGCSTMDTRDTSTICRCTHLSSFAVLMAPYDVQ) are GPS. A helical membrane pass occupies residues 531–551 (VITYMGLSLSLLCLLLAALTF). The Cytoplasmic portion of the chain corresponds to 552-562 (LLCKAIQNIST). The chain crosses the membrane as a helical span at residues 563 to 583 (SLHLQLSLCLLLAHLLFLVAI). Over 584–589 (DRTEHE) the chain is Extracellular. A helical transmembrane segment spans residues 590–610 (VLCAIIASALHYLYLAAFTWM). The Cytoplasmic segment spans residues 611 to 637 (LLEALYLFLTARNLMVVNYSSINRFTK). A helical membrane pass occupies residues 638-658 (KLMFPVAYGVPAVTVAISAAS). Residues 659–676 (RPHLYGTPSRCWLQPEKG) lie on the Extracellular side of the membrane. A helical membrane pass occupies residues 677–697 (FIWGFLGPVCAIFSVNLALLL). At 698 to 728 (VTLWILKNRLSSLNNEVSTLQNTRMLAFKAT) the chain is on the cytoplasmic side. The chain crosses the membrane as a helical span at residues 729 to 749 (AQLFILGCTWCLGILQVGPAA). The Extracellular portion of the chain corresponds to 750–753 (RVMA). Residues 754-774 (YLFTIINSLQGVFIFLVYCLL) traverse the membrane as a helical segment. Residues 775-822 (SQQVREQYRKWSKGFRKLRTESEMHTLSSSAKRDTPKPSTPGLLGLQS) lie on the Cytoplasmic side of the membrane. The disordered stretch occupies residues 797 to 822 (EMHTLSSSAKRDTPKPSTPGLLGLQS).

The protein belongs to the G-protein coupled receptor 2 family. Adhesion G-protein coupled receptor (ADGR) subfamily. As to quaternary structure, forms a heterodimer, consisting of a large extracellular region non-covalently linked to a seven-transmembrane moiety. Interacts with chondroitin sulfate; the interaction with chondroitin sulfate is calcium-dependent. Interacts with CD55. In terms of processing, autoproteolytically cleaved into 2 subunits, an extracellular alpha subunit and a seven-transmembrane beta subunit.

It localises to the cell membrane. The protein localises to the cell projection. The protein resides in the ruffle membrane. Functionally, cell surface receptor that binds to the chondroitin sulfate moiety of glycosaminoglycan chains and promotes cell attachment. Promotes granulocyte chemotaxis, degranulation and adhesion. In macrophages, promotes the release of inflammatory cytokines, including IL8 and TNF. Signals probably through G-proteins. This Macaca mulatta (Rhesus macaque) protein is Adhesion G protein-coupled receptor E2 (ADGRE2).